The primary structure comprises 1699 residues: Cilia- and flagella-associated protein 61 (1699 aa).

Residues Met1–Gln22 show a composition bias toward polar residues. Disordered regions lie at residues Met1–Ser23, Gln489–Lys515, and Glu1340–Gln1365. Residues Gln489–Arg503 are compositionally biased toward basic residues. 2 stretches are compositionally biased toward basic and acidic residues: residues Gln504–Lys515 and Glu1340–Asp1359.

The protein localises to the cell projection. The protein resides in the cilium. Functionally, as component of a spoke-associated complex, regulates ciliary mobility by mediating a stable and functional assembly of the radial spoke 3 (RS3). This Tetrahymena thermophila (strain SB210) protein is Cilia- and flagella-associated protein 61.